Consider the following 88-residue polypeptide: Small ribosomal subunit protein uS17 (88 aa).

The protein belongs to the universal ribosomal protein uS17 family. As to quaternary structure, part of the 30S ribosomal subunit.

In terms of biological role, one of the primary rRNA binding proteins, it binds specifically to the 5'-end of 16S ribosomal RNA. The sequence is that of Small ribosomal subunit protein uS17 from Prochlorococcus marinus (strain SARG / CCMP1375 / SS120).